A 96-amino-acid polypeptide reads, in one-letter code: Small ribosomal subunit protein bS16 (96 aa).

This sequence belongs to the bacterial ribosomal protein bS16 family.

This is Small ribosomal subunit protein bS16 from Anaplasma phagocytophilum (strain HZ).